A 198-amino-acid polypeptide reads, in one-letter code: Proteasome subunit beta 1 (198 aa).

Positions 1 to 6 (MSGPGA) are cleaved as a propeptide — removed in mature form; by autocatalysis. Catalysis depends on threonine 7, which acts as the Nucleophile.

It belongs to the peptidase T1B family. In terms of assembly, the 20S proteasome core is composed of 14 alpha and 14 beta subunits that assemble into four stacked heptameric rings, resulting in a barrel-shaped structure. The two inner rings, each composed of seven catalytic beta subunits, are sandwiched by two outer rings, each composed of seven alpha subunits. The catalytic chamber with the active sites is on the inside of the barrel. Has a gated structure, the ends of the cylinder being occluded by the N-termini of the alpha-subunits. Is capped at one or both ends by the proteasome regulatory ATPase, PAN.

Its subcellular location is the cytoplasm. The enzyme catalyses Cleavage of peptide bonds with very broad specificity.. With respect to regulation, the formation of the proteasomal ATPase PAN-20S proteasome complex, via the docking of the C-termini of PAN into the intersubunit pockets in the alpha-rings, triggers opening of the gate for substrate entry. Interconversion between the open-gate and close-gate conformations leads to a dynamic regulation of the 20S proteasome proteolysis activity. Its function is as follows. Component of the proteasome core, a large protease complex with broad specificity involved in protein degradation. This chain is Proteasome subunit beta 1, found in Ignicoccus hospitalis (strain KIN4/I / DSM 18386 / JCM 14125).